The following is a 127-amino-acid chain: PanD regulatory factor (127 aa).

The N-acetyltransferase domain maps to 1–127 (MKLTIIRLEK…TAQQGGWEKC (127 aa)). Interaction with PanD regions lie at residues 43 to 48 (RFNERL) and 66 to 76 (LRVREVTRRRG). CoA-binding positions include 66 to 68 (LRV) and 72 to 79 (TRRRGVGQ).

It belongs to the PanZ/PanM family. Interacts with PanD in the presence of CoA. Forms a heterooctameric complex composed of four PanD subunits and four PanZ subunits. Monomer in solution.

With respect to regulation, activation of PanD processing occurs even at low CoA concentrations. In contrast, full inhibition of PanD catalytic activity only occurs at sufficiently high CoA concentrations. Functionally, controls both the activation and catalytic activity of PanD in a coenzyme A (CoA)-dependent fashion. Binding of CoA or a derivative to PanZ leads to interaction with PanD, which promotes the processing and activation of pro-PanD, and subsequent substrate-mediated inhibition of the active form of PanD. Inhibition of PanD activity is probably the primary metabolic role of PanZ, allowing negative feedback regulation of pantothenate biosynthesis by CoA. The sequence is that of PanD regulatory factor from Escherichia coli (strain K12).